We begin with the raw amino-acid sequence, 274 residues long: 2,3,4,5-tetrahydropyridine-2,6-dicarboxylate N-succinyltransferase (274 aa).

Substrate contacts are provided by arginine 104 and aspartate 141.

Belongs to the transferase hexapeptide repeat family. As to quaternary structure, homotrimer.

The protein resides in the cytoplasm. The enzyme catalyses (S)-2,3,4,5-tetrahydrodipicolinate + succinyl-CoA + H2O = (S)-2-succinylamino-6-oxoheptanedioate + CoA. It participates in amino-acid biosynthesis; L-lysine biosynthesis via DAP pathway; LL-2,6-diaminopimelate from (S)-tetrahydrodipicolinate (succinylase route): step 1/3. The chain is 2,3,4,5-tetrahydropyridine-2,6-dicarboxylate N-succinyltransferase from Shewanella loihica (strain ATCC BAA-1088 / PV-4).